Reading from the N-terminus, the 352-residue chain is Ni-sirohydrochlorin a,c-diamide reductive cyclase complex, component CfbD (352 aa).

Belongs to the NifD/NifK/NifE/NifN family. As to quaternary structure, homodimer or monomer. The Ni-sirohydrochlorin a,c-diamide reductive cyclase complex is composed of a NifH homolog component CfbC and a NifD homolog component CfbD. It depends on [4Fe-4S] cluster as a cofactor.

The enzyme catalyses Ni-sirohydrochlorin a,c-diamide + 3 AH2 + ATP + H2O = 15,17(3)-seco-F430-17(3)-acid + 3 A + ADP + phosphate. In terms of biological role, involved in the biosynthesis of the unique nickel-containing tetrapyrrole coenzyme F430, the prosthetic group of methyl-coenzyme M reductase (MCR), which plays a key role in methanogenesis and anaerobic methane oxidation. Catalyzes both the six-electron reduction of the tetrahydroporphyrin ring system and the gamma-lactamization of the c-acetamide side chain of Ni-sirohydrochlorin a,c-diamide to yield 15,17(3)-seco-F430-17(3)-acid (seco-F430), the last intermediate in the biosynthesis of the coenzyme F430. The chain is Ni-sirohydrochlorin a,c-diamide reductive cyclase complex, component CfbD from Methanocaldococcus jannaschii (strain ATCC 43067 / DSM 2661 / JAL-1 / JCM 10045 / NBRC 100440) (Methanococcus jannaschii).